The chain runs to 272 residues: 3-methyl-2-oxobutanoate hydroxymethyltransferase (272 aa).

Mg(2+)-binding residues include Asp42 and Asp86. Residues 42–43, Asp86, and Lys116 each bind 3-methyl-2-oxobutanoate; that span reads DS. A Mg(2+)-binding site is contributed by Glu118. Catalysis depends on Glu185, which acts as the Proton acceptor.

The protein belongs to the PanB family. In terms of assembly, homodecamer; pentamer of dimers. It depends on Mg(2+) as a cofactor.

The protein localises to the cytoplasm. It carries out the reaction 3-methyl-2-oxobutanoate + (6R)-5,10-methylene-5,6,7,8-tetrahydrofolate + H2O = 2-dehydropantoate + (6S)-5,6,7,8-tetrahydrofolate. It participates in cofactor biosynthesis; (R)-pantothenate biosynthesis; (R)-pantoate from 3-methyl-2-oxobutanoate: step 1/2. Its function is as follows. Catalyzes the reversible reaction in which hydroxymethyl group from 5,10-methylenetetrahydrofolate is transferred onto alpha-ketoisovalerate to form ketopantoate. This is 3-methyl-2-oxobutanoate hydroxymethyltransferase from Prochlorococcus marinus (strain MIT 9313).